Consider the following 339-residue polypeptide: MSKPKIGINGFGRIGRLVLRAAVEKDTVEVVAVNDPFINIDYMVYMFKYDSTHGRFKGHVSAEGGKLIVTNGKTTHQIAVHNSKDPAEIPWGVEGAEYVVESTGVFTHTEKASAHLKGGAKKVIISAPSADAPMFVMGVNNDKYDKANNHIISNASCTTNCLAPLAKVIHDKFGIIEGLMTTVHATTATQKTVDGPSGKLWRDGRGAGQNIIPASTGAAKAVGKVIPDLNGKLTGMASRVPTPDVSVVDLTCRLQKGASMDEIKAAVKEAAAGPMKGILEYTEDQVVSSDFVGDPHSSIFDALACISLNPNFVKLIAWYDNEYGYSNRVVDLISYNASK.

Residues 13–14 (RI), aspartate 35, and lysine 84 each bind NAD(+). Residues 156–158 (SCT), threonine 187, 216–217 (TG), and arginine 239 each bind D-glyceraldehyde 3-phosphate. Cysteine 157 acts as the Nucleophile in catalysis. Residue asparagine 321 coordinates NAD(+).

It belongs to the glyceraldehyde-3-phosphate dehydrogenase family. In terms of assembly, homotetramer.

The protein localises to the cytoplasm. It carries out the reaction D-glyceraldehyde 3-phosphate + phosphate + NAD(+) = (2R)-3-phospho-glyceroyl phosphate + NADH + H(+). It participates in carbohydrate degradation; glycolysis; pyruvate from D-glyceraldehyde 3-phosphate: step 1/5. The polypeptide is Glyceraldehyde-3-phosphate dehydrogenase (Onchocerca volvulus).